A 295-amino-acid chain; its full sequence is 4-hydroxy-3-methylbut-2-enyl diphosphate reductase (295 aa).

Cys-12 is a binding site for [4Fe-4S] cluster. 2 residues coordinate (2E)-4-hydroxy-3-methylbut-2-enyl diphosphate: His-43 and His-81. Residues His-43 and His-81 each contribute to the dimethylallyl diphosphate site. 2 residues coordinate isopentenyl diphosphate: His-43 and His-81. Residue Cys-103 participates in [4Fe-4S] cluster binding. Residue His-131 coordinates (2E)-4-hydroxy-3-methylbut-2-enyl diphosphate. His-131 lines the dimethylallyl diphosphate pocket. Isopentenyl diphosphate is bound at residue His-131. The active-site Proton donor is Glu-133. Thr-171 contacts (2E)-4-hydroxy-3-methylbut-2-enyl diphosphate. [4Fe-4S] cluster is bound at residue Cys-199. 3 residues coordinate (2E)-4-hydroxy-3-methylbut-2-enyl diphosphate: Ser-227, Asn-229, and Ser-272. Dimethylallyl diphosphate is bound by residues Ser-227, Asn-229, and Ser-272. Ser-227, Asn-229, and Ser-272 together coordinate isopentenyl diphosphate.

Belongs to the IspH family. [4Fe-4S] cluster serves as cofactor.

The catalysed reaction is isopentenyl diphosphate + 2 oxidized [2Fe-2S]-[ferredoxin] + H2O = (2E)-4-hydroxy-3-methylbut-2-enyl diphosphate + 2 reduced [2Fe-2S]-[ferredoxin] + 2 H(+). The enzyme catalyses dimethylallyl diphosphate + 2 oxidized [2Fe-2S]-[ferredoxin] + H2O = (2E)-4-hydroxy-3-methylbut-2-enyl diphosphate + 2 reduced [2Fe-2S]-[ferredoxin] + 2 H(+). The protein operates within isoprenoid biosynthesis; dimethylallyl diphosphate biosynthesis; dimethylallyl diphosphate from (2E)-4-hydroxy-3-methylbutenyl diphosphate: step 1/1. It participates in isoprenoid biosynthesis; isopentenyl diphosphate biosynthesis via DXP pathway; isopentenyl diphosphate from 1-deoxy-D-xylulose 5-phosphate: step 6/6. Functionally, catalyzes the conversion of 1-hydroxy-2-methyl-2-(E)-butenyl 4-diphosphate (HMBPP) into a mixture of isopentenyl diphosphate (IPP) and dimethylallyl diphosphate (DMAPP). Acts in the terminal step of the DOXP/MEP pathway for isoprenoid precursor biosynthesis. The sequence is that of 4-hydroxy-3-methylbut-2-enyl diphosphate reductase from Symbiobacterium thermophilum (strain DSM 24528 / JCM 14929 / IAM 14863 / T).